We begin with the raw amino-acid sequence, 366 residues long: MRVILSGGGTGGHIYPAISIANKIKEQHPKAEILFIGTENGMESEIVPKAGYPIKYVTVSYLKRKISLHNVKSAAMLLKGIAEARKIIKEFKPDIVIGTGGFVCGPVLYMASKLGIRTMIHEQNVFPGLTNRILDRYVDRIALSFKDAEKYFKHKNKLVVTGNPIRSDFMEVTEVEASARYKTDSDLPLVLVVGGSGGALKINRAVVEILNQYQPNKYRLLLVTGKRLYKSTLESINAESLQSKHKVFAYVNDMPHALKACDLIVCSAGAITIAEVTAVGKASILIPKAHTAENHQEYNANAMGNKGAAVVIREDELSGEILNKKIQDIIGNIQVVKKMEAASYKEGIRDAADRIYSEMQALLERK.

UDP-N-acetyl-alpha-D-glucosamine is bound by residues 10-12, asparagine 124, arginine 166, serine 196, and glutamine 296; that span reads TGG.

The protein belongs to the glycosyltransferase 28 family. MurG subfamily.

The protein localises to the cell membrane. The enzyme catalyses di-trans,octa-cis-undecaprenyl diphospho-N-acetyl-alpha-D-muramoyl-L-alanyl-D-glutamyl-meso-2,6-diaminopimeloyl-D-alanyl-D-alanine + UDP-N-acetyl-alpha-D-glucosamine = di-trans,octa-cis-undecaprenyl diphospho-[N-acetyl-alpha-D-glucosaminyl-(1-&gt;4)]-N-acetyl-alpha-D-muramoyl-L-alanyl-D-glutamyl-meso-2,6-diaminopimeloyl-D-alanyl-D-alanine + UDP + H(+). The protein operates within cell wall biogenesis; peptidoglycan biosynthesis. In terms of biological role, cell wall formation. Catalyzes the transfer of a GlcNAc subunit on undecaprenyl-pyrophosphoryl-MurNAc-pentapeptide (lipid intermediate I) to form undecaprenyl-pyrophosphoryl-MurNAc-(pentapeptide)GlcNAc (lipid intermediate II). The sequence is that of UDP-N-acetylglucosamine--N-acetylmuramyl-(pentapeptide) pyrophosphoryl-undecaprenol N-acetylglucosamine transferase from Alkaliphilus oremlandii (strain OhILAs) (Clostridium oremlandii (strain OhILAs)).